The following is a 399-amino-acid chain: Telomeric repeat-binding factor 2-interacting protein 1 (399 aa).

The interval 1 to 21 (MAEAMELGKDPNGPTHSSTLF) is disordered. A2 is subject to N-acetylalanine. The 92-residue stretch at 10–101 (DPNGPTHSST…EKLELEAYRL (92 aa)) folds into the BRCT domain. S36 and S43 each carry phosphoserine. Residue K114 forms a Glycyl lysine isopeptide (Lys-Gly) (interchain with G-Cter in SUMO2) linkage. In terms of domain architecture, Myb-like spans 130-190 (QSQAGRMVFT…SMKDRYLKRL (61 aa)). Residues S156 and S158 each carry the phosphoserine modification. Residue K196 forms a Glycyl lysine isopeptide (Lys-Gly) (interchain with G-Cter in SUMO2) linkage. 2 disordered regions span residues 199–245 (LGEA…KEEI) and 279–309 (TMCD…VSAP). Phosphoserine occurs at positions 205 and 208. Residues K210, K214, and K242 each participate in a glycyl lysine isopeptide (Lys-Gly) (interchain with G-Cter in SUMO2) cross-link. A compositionally biased stretch (acidic residues) spans 281–304 (CDDDPCTPEEDSETQPDEEEEEEE). A Glycyl lysine isopeptide (Lys-Gly) (interchain with G-Cter in SUMO2) cross-link involves residue K372. The short motif at 383–399 (KKFGAQNVARRIEFRKK) is the Nuclear localization signal element.

The protein belongs to the RAP1 family. Associates with the I-kappa-B-kinase (IKK) core complex, composed of CHUK, IKBKB and IKBKG. Homodimer. Component of the shelterin complex (telosome) composed of TERF1, TERF2, TINF2, TERF2IP ACD and POT1. Interacts with TERF2 (but not TERF1) with its C-terminus. Interacts with SLX4/BTBD12. Interacts with TERF2; the interaction is direct.

Its subcellular location is the nucleus. The protein localises to the cytoplasm. The protein resides in the chromosome. It localises to the telomere. Acts both as a regulator of telomere function and as a transcription regulator. Involved in the regulation of telomere length and protection as a component of the shelterin complex (telosome). In contrast to other components of the shelterin complex, it is dispensible for telomere capping and does not participate in the protection of telomeres against non-homologous end-joining (NHEJ)-mediated repair. Instead, it is required to negatively regulate telomere recombination and is essential for repressing homology-directed repair (HDR), which can affect telomere length. Does not bind DNA directly: recruited to telomeric double-stranded 5'-TTAGGG-3' repeats via its interaction with TERF2. Independently of its function in telomeres, also acts as a transcription regulator: recruited to extratelomeric 5'-TTAGGG-3' sites via its association with TERF2 or other factors, and regulates gene expression. When cytoplasmic, associates with the I-kappa-B-kinase (IKK) complex and acts as a regulator of the NF-kappa-B signaling by promoting IKK-mediated phosphorylation of RELA/p65, leading to activate expression of NF-kappa-B target genes. This chain is Telomeric repeat-binding factor 2-interacting protein 1 (TERF2IP), found in Bos taurus (Bovine).